The sequence spans 72 residues: Translation initiation factor IF-1 (72 aa).

Positions 1–72 (MAKDDVIEVE…TRGRITYRFK (72 aa)) constitute an S1-like domain.

It belongs to the IF-1 family. As to quaternary structure, component of the 30S ribosomal translation pre-initiation complex which assembles on the 30S ribosome in the order IF-2 and IF-3, IF-1 and N-formylmethionyl-tRNA(fMet); mRNA recruitment can occur at any time during PIC assembly.

Its subcellular location is the cytoplasm. One of the essential components for the initiation of protein synthesis. Stabilizes the binding of IF-2 and IF-3 on the 30S subunit to which N-formylmethionyl-tRNA(fMet) subsequently binds. Helps modulate mRNA selection, yielding the 30S pre-initiation complex (PIC). Upon addition of the 50S ribosomal subunit IF-1, IF-2 and IF-3 are released leaving the mature 70S translation initiation complex. This is Translation initiation factor IF-1 from Streptococcus pneumoniae serotype 2 (strain D39 / NCTC 7466).